The primary structure comprises 204 residues: Probable nicotinate-nucleotide adenylyltransferase (204 aa).

Belongs to the NadD family.

It catalyses the reaction nicotinate beta-D-ribonucleotide + ATP + H(+) = deamido-NAD(+) + diphosphate. Its pathway is cofactor biosynthesis; NAD(+) biosynthesis; deamido-NAD(+) from nicotinate D-ribonucleotide: step 1/1. Its function is as follows. Catalyzes the reversible adenylation of nicotinate mononucleotide (NaMN) to nicotinic acid adenine dinucleotide (NaAD). This chain is Probable nicotinate-nucleotide adenylyltransferase, found in Mycobacterium sp. (strain JLS).